Consider the following 358-residue polypeptide: Phospho-N-acetylmuramoyl-pentapeptide-transferase (358 aa).

Helical transmembrane passes span 28 to 48 (WALA…IAWL), 72 to 92 (TMGG…WADL), 96 to 116 (YIWL…LDDY), 133 to 153 (FLWQ…LPAY), 164 to 184 (GLTP…MVGS), 196 to 216 (GLAI…IYVA), 233 to 253 (VGEV…FLWF), 260 to 280 (VFMG…LAVL), 285 to 305 (LLLL…ILQV), and 335 to 355 (KIII…LSVL).

This sequence belongs to the glycosyltransferase 4 family. MraY subfamily. Requires Mg(2+) as cofactor.

Its subcellular location is the cell inner membrane. The enzyme catalyses UDP-N-acetyl-alpha-D-muramoyl-L-alanyl-gamma-D-glutamyl-meso-2,6-diaminopimeloyl-D-alanyl-D-alanine + di-trans,octa-cis-undecaprenyl phosphate = di-trans,octa-cis-undecaprenyl diphospho-N-acetyl-alpha-D-muramoyl-L-alanyl-D-glutamyl-meso-2,6-diaminopimeloyl-D-alanyl-D-alanine + UMP. It participates in cell wall biogenesis; peptidoglycan biosynthesis. Functionally, catalyzes the initial step of the lipid cycle reactions in the biosynthesis of the cell wall peptidoglycan: transfers peptidoglycan precursor phospho-MurNAc-pentapeptide from UDP-MurNAc-pentapeptide onto the lipid carrier undecaprenyl phosphate, yielding undecaprenyl-pyrophosphoryl-MurNAc-pentapeptide, known as lipid I. The chain is Phospho-N-acetylmuramoyl-pentapeptide-transferase from Nitratidesulfovibrio vulgaris (strain ATCC 29579 / DSM 644 / CCUG 34227 / NCIMB 8303 / VKM B-1760 / Hildenborough) (Desulfovibrio vulgaris).